The sequence spans 503 residues: Transcription termination/antitermination protein NusA (503 aa).

Positions 139 to 203 constitute an S1 motif domain; that stretch reads GDIINGIVKR…KGPQIFLSRV (65 aa). The region spanning 308-378 is the KH domain; it reads SHKVEVVVSQ…LDVEEVIGQL (71 aa).

It belongs to the NusA family. In terms of assembly, monomer. Binds directly to the core enzyme of the DNA-dependent RNA polymerase and to nascent RNA.

It localises to the cytoplasm. Participates in both transcription termination and antitermination. This is Transcription termination/antitermination protein NusA from Rickettsia prowazekii (strain Madrid E).